Consider the following 514-residue polypeptide: Proline--tRNA ligase (514 aa).

Belongs to the class-II aminoacyl-tRNA synthetase family. ProS type 3 subfamily. In terms of assembly, homodimer.

Its subcellular location is the cytoplasm. The enzyme catalyses tRNA(Pro) + L-proline + ATP = L-prolyl-tRNA(Pro) + AMP + diphosphate. Catalyzes the attachment of proline to tRNA(Pro) in a two-step reaction: proline is first activated by ATP to form Pro-AMP and then transferred to the acceptor end of tRNA(Pro). The protein is Proline--tRNA ligase of Erythrobacter litoralis (strain HTCC2594).